Here is a 1144-residue protein sequence, read N- to C-terminus: Ribonucleoside-diphosphate reductase large subunit (1144 aa).

Residues 1–33 (MANRPAASALAGARSPSERQEPREPEVAPPGGD) form a disordered region. Basic and acidic residues predominate over residues 16–26 (PSERQEPREPE). An RIP homotypic interaction motif (RHIM) motif is present at residues 55 to 75 (AYRISDSSFVQCGSNCSMIID). Positions 118–324 (SGPSATTSVG…TDPGYPVPLE (207 aa)) are disordered. Residues 119–132 (GPSATTSVGTQTSG) are compositionally biased toward polar residues. The span at 141–159 (TPEPQGPQAVPPPPPPPFP) shows a compositional bias: pro residues. The segment covering 164-179 (CCARRDARGGAEKDVG) has biased composition (basic and acidic residues). Residues 192–204 (SETEDSDSSDEDT) are compositionally biased toward acidic residues. Low complexity-rich tracts occupy residues 205–216 (GSGSETLSRSSS) and 279–305 (GSAT…DVAP). Substrate-binding positions include Thr-573, 588 to 589 (SC), Gly-619, 798 to 802 (NLCTE), and 975 to 979 (PTAAS). A disulfide bridge links Cys-589 with Cys-815. The active-site Proton acceptor is the Asn-798. The Cysteine radical intermediate role is filled by Cys-800. The active-site Proton acceptor is the Glu-802.

Belongs to the ribonucleoside diphosphate reductase large chain family. As to quaternary structure, heterotetramer composed of a homodimer of the large subunit (R1) and a homodimer of the small subunit (R2). Larger multisubunit protein complex are also active, composed of (R1)n(R2)n. May self-assemble (via RIP homotypic interaction motif/RHIM) into homomeric fibrillar amyloid structures. Interacts (via RHIM) with human RIPK1 (via RHIM). Interacts (via RHIM) with human RIPK3 (via RHIM). May interact (via RHIM) with human ZBP1 (via RHIM). Interacts (via C-terminus) with host CASP8.

The enzyme catalyses a 2'-deoxyribonucleoside 5'-diphosphate + [thioredoxin]-disulfide + H2O = a ribonucleoside 5'-diphosphate + [thioredoxin]-dithiol. In terms of biological role, ribonucleoside-diphosphate reductase holoenzyme that provides the precursors necessary for viral DNA synthesis. Allows virus growth in non-dividing cells, as well as reactivation from latency in infected hosts. Catalyzes the biosynthesis of deoxyribonucleotides from the corresponding ribonucleotides. The N-terminal region confers antiapoptotic activity in differentiated cells such as neurons and is important for viral reactivation to increase neural survivability. Prevents host necroptosis by targeting host RIPK1 and RIPK3, thereby hampering the formation of necroptotic RIPK1-RIPK3 complexes. May form hetero-amyloid structures with host proteins RIPK3 or ZBP1, thereby preventing RIPK3- and ZBP1-mediated necroptosis. In addition, inhibits extrinsic apoptosis by targeting host CASP8. This Homo sapiens (Human) protein is Ribonucleoside-diphosphate reductase large subunit.